Here is a 276-residue protein sequence, read N- to C-terminus: Large ribosomal subunit protein uL2 (276 aa).

Residues 210 to 276 (GRNRHRGIRP…KLIISRRKGK (67 aa)) are disordered. A compositionally biased stretch (basic and acidic residues) spans 230–240 (DHPHGGGEGKK). Positions 255-276 (KGAKTRRKKASDKLIISRRKGK) are enriched in basic residues.

Belongs to the universal ribosomal protein uL2 family. Part of the 50S ribosomal subunit. Forms a bridge to the 30S subunit in the 70S ribosome.

Its function is as follows. One of the primary rRNA binding proteins. Required for association of the 30S and 50S subunits to form the 70S ribosome, for tRNA binding and peptide bond formation. It has been suggested to have peptidyltransferase activity; this is somewhat controversial. Makes several contacts with the 16S rRNA in the 70S ribosome. This chain is Large ribosomal subunit protein uL2, found in Campylobacter jejuni subsp. jejuni serotype O:6 (strain 81116 / NCTC 11828).